Consider the following 521-residue polypeptide: HTH-type transcriptional regulatory protein TyrR (521 aa).

The ACT domain maps to 2–72; that stretch reads RLEVFCQDRI…GVTDVRTVPY (71 aa). The PAS domain occupies 78 to 120; sequence EHRVLSALLVAMPEPVFSVDLRTKVELANPAAQNLFNLDENKI. The Sigma-54 factor interaction domain maps to 207–436; sequence IVAVTPRMRQ…LKNALYRALT (230 aa). ATP contacts are provided by residues 235–242 and 298–307; these read GDTGTGKD and ANGGSVLLDE. A DNA-binding region (H-T-H motif) is located at residues 489–509; it reads STRKLAKRLGVSHTAIANKLR.

Homodimer. In presence of tyrosine (or high concentrations of phenylalanine or tryptophan) and ATP, it self-associates to form an hexamer.

It localises to the cytoplasm. Dual transcriptional regulator of the TyrR regulon, which includes a number of genes coding for proteins involved in the biosynthesis or transport of the three aromatic amino acids, phenylalanine, tyrosine and tryptophan. These three aromatic amino acids act as effectors which bind to the TyrR protein to form an active regulatory protein. Acts by binding specifically to TyrR boxes in the promoter region of the target genes. The sequence is that of HTH-type transcriptional regulatory protein TyrR from Enterobacter agglomerans (Erwinia herbicola).